The sequence spans 115 residues: MSEDYLKMFTGVVLLIFVIIAGYFFSERNDRKMFLLSSLVFLVVNIACLYVLTASLWFLCGAIMSQGAALVVSIVAAALPDVTSFDRFRRIFICIMLSSVWSGVMWFFIRGLMTG.

A run of 4 helical transmembrane segments spans residues 5–25, 39–59, 60–80, and 91–111; these read YLKMFTGVVLLIFVIIAGYFF, LVFLVVNIACLYVLTASLWFL, CGAIMSQGAALVVSIVAAALP, and IFICIMLSSVWSGVMWFFIRG.

The protein localises to the cell membrane. This is Protein TrbA (trbA) from Escherichia coli (strain K12).